A 332-amino-acid chain; its full sequence is Cell growth regulator with RING finger domain protein 1 (332 aa).

Residues 274 to 309 (CVVCQNGGVNWVLLPCRHACLCDSCVCYFKQCPMCR) form an RING-type zinc finger.

Highly expressed in testis, lower levels of expression is seen in skeletal muscle, liver, lung and brain.

It is found in the nucleus. The protein resides in the endoplasmic reticulum. Able to inhibit growth in several cell lines. The sequence is that of Cell growth regulator with RING finger domain protein 1 (Cgrrf1) from Rattus norvegicus (Rat).